We begin with the raw amino-acid sequence, 443 residues long: Thymidine phosphorylase (443 aa).

It belongs to the thymidine/pyrimidine-nucleoside phosphorylase family. As to quaternary structure, homodimer.

The catalysed reaction is thymidine + phosphate = 2-deoxy-alpha-D-ribose 1-phosphate + thymine. The protein operates within pyrimidine metabolism; dTMP biosynthesis via salvage pathway; dTMP from thymine: step 1/2. Its function is as follows. The enzymes which catalyze the reversible phosphorolysis of pyrimidine nucleosides are involved in the degradation of these compounds and in their utilization as carbon and energy sources, or in the rescue of pyrimidine bases for nucleotide synthesis. In Shewanella loihica (strain ATCC BAA-1088 / PV-4), this protein is Thymidine phosphorylase.